Consider the following 353-residue polypeptide: Deoxyribonuclease-2-alpha (353 aa).

A signal peptide spans 1 to 19 (MATLRSLLLAALLWVPAEA). Cysteine 22 and cysteine 161 form a disulfide bridge. Asparagine 71, asparagine 88, asparagine 214, and asparagine 268 each carry an N-linked (GlcNAc...) asparagine glycan. Intrachain disulfides connect cysteine 269/cysteine 349 and cysteine 310/cysteine 329. The active site involves histidine 297.

This sequence belongs to the DNase II family. As to expression, highly expressed in fetal liver macrophages.

The protein resides in the lysosome. The enzyme catalyses Endonucleolytic cleavage to nucleoside 3'-phosphates and 3'-phosphooligonucleotide end-products.. In terms of biological role, hydrolyzes DNA under acidic conditions with a preference for double-stranded DNA. Plays a major role in the clearance of nucleic acids generated through apoptosis, hence preventing autoinflammation. Necessary for proper fetal development and for definitive erythropoiesis in fetal liver and bone marrow, where it degrades nuclear DNA expelled from erythroid precursor cells. The protein is Deoxyribonuclease-2-alpha (Dnase2) of Mus musculus (Mouse).